Consider the following 555-residue polypeptide: CTP synthase (555 aa).

The tract at residues 1–265 (MTRYIFITGG…GNRVCEKLNI (265 aa)) is amidoligase domain. S13 contacts CTP. Position 13 (S13) interacts with UTP. ATP-binding positions include 14–19 (SLGKGI) and D71. Mg(2+)-binding residues include D71 and E139. Residues 146 to 148 (DIE), 186 to 191 (KTKPTQ), and K222 each bind CTP. UTP is bound by residues 186–191 (KTKPTQ) and K222. Residues 290-541 (TVAVVGKYVD…IKAGLAAKEA (252 aa)) enclose the Glutamine amidotransferase type-1 domain. Residue G351 coordinates L-glutamine. The active-site Nucleophile; for glutamine hydrolysis is the C378. L-glutamine is bound by residues 379-382 (LGMQ), E402, and R469. Active-site residues include H514 and E516.

This sequence belongs to the CTP synthase family. Homotetramer.

The catalysed reaction is UTP + L-glutamine + ATP + H2O = CTP + L-glutamate + ADP + phosphate + 2 H(+). It carries out the reaction L-glutamine + H2O = L-glutamate + NH4(+). It catalyses the reaction UTP + NH4(+) + ATP = CTP + ADP + phosphate + 2 H(+). It functions in the pathway pyrimidine metabolism; CTP biosynthesis via de novo pathway; CTP from UDP: step 2/2. Its activity is regulated as follows. Allosterically activated by GTP, when glutamine is the substrate; GTP has no effect on the reaction when ammonia is the substrate. The allosteric effector GTP functions by stabilizing the protein conformation that binds the tetrahedral intermediate(s) formed during glutamine hydrolysis. Inhibited by the product CTP, via allosteric rather than competitive inhibition. Functionally, catalyzes the ATP-dependent amination of UTP to CTP with either L-glutamine or ammonia as the source of nitrogen. Regulates intracellular CTP levels through interactions with the four ribonucleotide triphosphates. In Coxiella burnetii (strain RSA 493 / Nine Mile phase I), this protein is CTP synthase.